Here is a 96-residue protein sequence, read N- to C-terminus: Co-chaperonin GroES (96 aa).

It belongs to the GroES chaperonin family. As to quaternary structure, heptamer of 7 subunits arranged in a ring. Interacts with the chaperonin GroEL.

It is found in the cytoplasm. Its function is as follows. Together with the chaperonin GroEL, plays an essential role in assisting protein folding. The GroEL-GroES system forms a nano-cage that allows encapsulation of the non-native substrate proteins and provides a physical environment optimized to promote and accelerate protein folding. GroES binds to the apical surface of the GroEL ring, thereby capping the opening of the GroEL channel. This is Co-chaperonin GroES from Methylobacillus flagellatus (strain ATCC 51484 / DSM 6875 / VKM B-1610 / KT).